We begin with the raw amino-acid sequence, 398 residues long: CCA-adding enzyme (398 aa).

Gly-32 and Arg-35 together coordinate ATP. CTP-binding residues include Gly-32 and Arg-35. Mg(2+) is bound by residues Asp-45 and Asp-47. ATP is bound by residues Arg-116, Asp-159, Arg-162, Arg-165, and Arg-168. Positions 116, 159, 162, 165, and 168 each coordinate CTP.

This sequence belongs to the tRNA nucleotidyltransferase/poly(A) polymerase family. Bacterial CCA-adding enzyme type 3 subfamily. Homodimer. Requires Mg(2+) as cofactor.

It carries out the reaction a tRNA precursor + 2 CTP + ATP = a tRNA with a 3' CCA end + 3 diphosphate. The enzyme catalyses a tRNA with a 3' CCA end + 2 CTP + ATP = a tRNA with a 3' CCACCA end + 3 diphosphate. Catalyzes the addition and repair of the essential 3'-terminal CCA sequence in tRNAs without using a nucleic acid template. Adds these three nucleotides in the order of C, C, and A to the tRNA nucleotide-73, using CTP and ATP as substrates and producing inorganic pyrophosphate. tRNA 3'-terminal CCA addition is required both for tRNA processing and repair. Also involved in tRNA surveillance by mediating tandem CCA addition to generate a CCACCA at the 3' terminus of unstable tRNAs. While stable tRNAs receive only 3'-terminal CCA, unstable tRNAs are marked with CCACCA and rapidly degraded. The chain is CCA-adding enzyme from Lactobacillus gasseri (strain ATCC 33323 / DSM 20243 / BCRC 14619 / CIP 102991 / JCM 1131 / KCTC 3163 / NCIMB 11718 / NCTC 13722 / AM63).